The following is a 197-amino-acid chain: ATP-dependent Clp protease proteolytic subunit 2 (197 aa).

Catalysis depends on Ser-97, which acts as the Nucleophile. The active site involves His-122.

It belongs to the peptidase S14 family. In terms of assembly, fourteen ClpP subunits assemble into 2 heptameric rings which stack back to back to give a disk-like structure with a central cavity, resembling the structure of eukaryotic proteasomes.

The protein localises to the cytoplasm. The enzyme catalyses Hydrolysis of proteins to small peptides in the presence of ATP and magnesium. alpha-casein is the usual test substrate. In the absence of ATP, only oligopeptides shorter than five residues are hydrolyzed (such as succinyl-Leu-Tyr-|-NHMec, and Leu-Tyr-Leu-|-Tyr-Trp, in which cleavage of the -Tyr-|-Leu- and -Tyr-|-Trp bonds also occurs).. In terms of biological role, cleaves peptides in various proteins in a process that requires ATP hydrolysis. Has a chymotrypsin-like activity. Plays a major role in the degradation of misfolded proteins. The protein is ATP-dependent Clp protease proteolytic subunit 2 of Leptospira interrogans serogroup Icterohaemorrhagiae serovar copenhageni (strain Fiocruz L1-130).